A 650-amino-acid polypeptide reads, in one-letter code: Probable potassium transport system protein Kup 1 (650 aa).

12 helical membrane-spanning segments follow: residues 12 to 32 (GLLIAIGIVYGDIGTSPLYVM), 54 to 74 (ISLVLWTVTLLTTLQTVIIAL), 97 to 117 (WLVLPALIGGAAILADGTLTP), 139 to 159 (VSSQSMVIAITVLILLVLFSI), 170 to 190 (AFGPIMFVWFTFLGVIGLINM), 216 to 236 (AGIFILGSIFLATTGAEALYS), 249 to 269 (SWPFVFVCLSLNYFGQGVWIL), 295 to 315 (LAAIILATIAAVIASQALITG), 344 to 364 (IYIPSINKGICVATIAIVLYF), 375 to 395 (GLSITISMLMTTILLYEWLAM), 400 to 420 (PVWNWIFLIFFGVLDIMFMIS), and 428 to 448 (GGYVSLFIAGAIGFIMYVWYY).

The protein belongs to the HAK/KUP transporter (TC 2.A.72) family.

It localises to the cell membrane. The enzyme catalyses K(+)(in) + H(+)(in) = K(+)(out) + H(+)(out). In terms of biological role, transport of potassium into the cell. Likely operates as a K(+):H(+) symporter. The protein is Probable potassium transport system protein Kup 1 of Lactobacillus acidophilus (strain ATCC 700396 / NCK56 / N2 / NCFM).